The chain runs to 295 residues: Pyridoxal 5'-phosphate synthase subunit PdxS (295 aa).

Aspartate 25 serves as a coordination point for D-ribose 5-phosphate. The active-site Schiff-base intermediate with D-ribose 5-phosphate is the lysine 82. Glycine 154 contacts D-ribose 5-phosphate. Position 166 (arginine 166) interacts with D-glyceraldehyde 3-phosphate. Residues glycine 215 and 236 to 237 contribute to the D-ribose 5-phosphate site; that span reads GS.

It belongs to the PdxS/SNZ family. As to quaternary structure, in the presence of PdxT, forms a dodecamer of heterodimers.

It carries out the reaction aldehydo-D-ribose 5-phosphate + D-glyceraldehyde 3-phosphate + L-glutamine = pyridoxal 5'-phosphate + L-glutamate + phosphate + 3 H2O + H(+). The protein operates within cofactor biosynthesis; pyridoxal 5'-phosphate biosynthesis. Functionally, catalyzes the formation of pyridoxal 5'-phosphate from ribose 5-phosphate (RBP), glyceraldehyde 3-phosphate (G3P) and ammonia. The ammonia is provided by the PdxT subunit. Can also use ribulose 5-phosphate and dihydroxyacetone phosphate as substrates, resulting from enzyme-catalyzed isomerization of RBP and G3P, respectively. This is Pyridoxal 5'-phosphate synthase subunit PdxS from Staphylococcus epidermidis (strain ATCC 35984 / DSM 28319 / BCRC 17069 / CCUG 31568 / BM 3577 / RP62A).